The chain runs to 795 residues: MASGAARYRLSCSLPGHELDVRGLVCCLYPPGAFVSVSRDRTTRLWAPDSPNRGFTEMHCMSGHSNFVSCVCIIPSSDIYPHGLIATGGNDHNICIFSLDSPMPLYILKGHKDTVCSLSSGKFGTLLSGSWDTTAKVWLNDKCMMTLQGHTAAVWAVKILPEQGLMLTGSADKTIKLWKAGRCERTFSGHEDCVRGLAILSETEFLSCANDASIRRWQITGECLGVYYGHTNYIYSISVFPNCRDFVTTAEDRSLRIWKHGECAQTIRLPAQSIWCCCVLDNGDIVVGASDGIIRVFTEADERTASAEEIKAFERELSQATIDSKTGDLGDINAEQLPGREHLNEPGTREGQTRLIRDGERVEAYQWSVSDGRWIKIGDVVGSSGANQQTSGKVLYEGKEFDYVFSIDVNEGGPSYKLPYNVSDDPWLVAYNFLQKNDLNPMFLDQVAKFIIDNTKGQTLGLGNTSFSDPFTGGGRYVPGTSGPSNTVQTADPFTGAGRYMPGSAGMDTTMAGVDPFTGNSAYRSAASKTVNIYFPKKEALTFDQANPTQILGKLKELNGSAPEEKKLTEDDLVLLEKILSLICGNASEKPTAQQLQVLWKAINWPEDIVFPALDILRLSIKHPSVNENFCNEKEGDQFSSHLINLLNPKGKPANQLLALRTFCNCFVSQAGQKLMMSQRESLMSHAIELKSGSNKNIHIALATLTLNYSVCFHKDHNIEGKAQCLSVISTILEVVQDLEATFRLLVALGTLISDDSNAIQLAKSLGVDSQIKKYASVSEPAKVSECCRLILNLL.

WD repeat units follow at residues 17 to 56 (HELDVRGLVCCLYPPGAFVSVSRDRTTRLWAPDSPNRGFT), 63 to 107 (GHSN…PLYI), 110 to 148 (GHKDTVCSLSSGKFGTLLSGSWDTTAKVWLNDKCMMTLQ), 149 to 188 (GHTAAVWAVKILPEQGLMLTGSADKTIKLWKAGRCERTFS), 190 to 227 (HEDCVRGLAILSETEFLSCANDASIRRWQITGECLGVY), 229 to 268 (GHTNYIYSISVFPNCRDFVTTAEDRSLRIWKHGECAQTIR), and 270 to 307 (PAQSIWCCCVLDNGDIVVGASDGIIRVFTEADERTASA). At Ser-50 the chain carries Phosphoserine. The PFU domain maps to 366–465 (QWSVSDGRWI…KGQTLGLGNT (100 aa)). Lys-529 bears the N6-acetyllysine mark. Residues 533–794 (IYFPKKEALT…SECCRLILNL (262 aa)) enclose the PUL domain. ARM repeat units lie at residues 546 to 588 (ANPT…GNAS), 589 to 620 (EKPTAQQLQVLWKAINWPEDIVFPALDILRLS), 621 to 669 (IKHP…CFVS), 670 to 715 (QAGQ…CFHK), 716 to 755 (DHNIEGKAQCLSVISTILEVVQDLEATFRLLVALGTLISD), and 756 to 795 (DSNAIQLAKSLGVDSQIKKYASVSEPAKVSECCRLILNLL).

Belongs to the WD repeat PLAP family. In terms of assembly, interacts with ubiquitin. Interacts with UBXN6, VCP and YOD1; may form a complex involved in macroautophagy.

Its subcellular location is the nucleus. The protein localises to the cytoplasm. It localises to the synapse. In terms of biological role, plays a role in protein ubiquitination, sorting and degradation through its association with VCP. Involved in ubiquitin-mediated membrane proteins trafficking to late endosomes in an ESCRT-dependent manner, and hence plays a role in synaptic vesicle recycling. May play a role in macroautophagy, regulating for instance the clearance of damaged lysosomes. Plays a role in cerebellar Purkinje cell development. Positively regulates cytosolic and calcium-independent phospholipase A2 activities in a tumor necrosis factor alpha (TNF-alpha)- or lipopolysaccharide (LPS)-dependent manner, and hence prostaglandin E2 biosynthesis. The polypeptide is Phospholipase A-2-activating protein (Plaa) (Rattus norvegicus (Rat)).